Consider the following 99-residue polypeptide: Osteocalcin (99 aa).

An N-terminal signal peptide occupies residues 1-23; that stretch reads MRTLSLLTLLALTAFCLSDLAGA. The propeptide occupies 24–49; it reads KPSDSESDKAFMSKQEGSKVVNRLRR. The Gla domain maps to 50-96; it reads YLNNGLGAPAPYPDPLEPHREVCELNPNCDELADHIGFQDAYKRIYG. Pro58 bears the Hydroxyproline mark. 4 residues coordinate Ca(2+): Glu66, Glu70, Glu73, and Asp79. A 4-carboxyglutamate mark is found at Glu66, Glu70, and Glu73. An intrachain disulfide couples Cys72 to Cys78.

This sequence belongs to the osteocalcin/matrix Gla protein family. Post-translationally, gamma-carboxyglutamate residues are formed by vitamin K dependent carboxylation by GGCX. These residues are essential for the binding of calcium. Decarboxylation promotes the hormone activity.

It is found in the secreted. Functionally, the carboxylated form is one of the main organic components of the bone matrix, which constitutes 1-2% of the total bone protein: it acts as a negative regulator of bone formation and is required to limit bone formation without impairing bone resorption or mineralization. The carboxylated form binds strongly to apatite and calcium. In terms of biological role, the uncarboxylated form acts as a hormone secreted by osteoblasts, which regulates different cellular processes, such as energy metabolism, male fertility and brain development. Regulates of energy metabolism by acting as a hormone favoring pancreatic beta-cell proliferation, insulin secretion and sensitivity and energy expenditure. Uncarboxylated osteocalcin hormone also promotes testosterone production in the testes: acts as a ligand for G protein-coupled receptor GPRC6A at the surface of Leydig cells, initiating a signaling response that promotes the expression of enzymes required for testosterone synthesis in a CREB-dependent manner. Also acts as a regulator of brain development: osteocalcin hormone crosses the blood-brain barrier and acts as a ligand for GPR158 on neurons, initiating a signaling response that prevents neuronal apoptosis in the hippocampus, favors the synthesis of all monoamine neurotransmitters and inhibits that of gamma-aminobutyric acid (GABA). Osteocalcin also crosses the placenta during pregnancy and maternal osteocalcin is required for fetal brain development. The polypeptide is Osteocalcin (Bglap) (Rattus norvegicus (Rat)).